The sequence spans 174 residues: Large ribosomal subunit protein uL10 (174 aa).

Belongs to the universal ribosomal protein uL10 family. As to quaternary structure, part of the ribosomal stalk of the 50S ribosomal subunit. The N-terminus interacts with L11 and the large rRNA to form the base of the stalk. The C-terminus forms an elongated spine to which L12 dimers bind in a sequential fashion forming a multimeric L10(L12)X complex.

In terms of biological role, forms part of the ribosomal stalk, playing a central role in the interaction of the ribosome with GTP-bound translation factors. The protein is Large ribosomal subunit protein uL10 of Verminephrobacter eiseniae (strain EF01-2).